We begin with the raw amino-acid sequence, 505 residues long: Peroxisome proliferator-activated receptor gamma (505 aa).

Thr84 carries O-linked (GlcNAc) threonine glycosylation. Ser112 bears the Phosphoserine mark. Residues 136-210 (AIECRVCGDK…VGMSHNAIRF (75 aa)) constitute a DNA-binding region (nuclear receptor). 2 consecutive NR C4-type zinc fingers follow at residues 139-159 (CRVCGDKASGFHYGVHACEGC) and 176-198 (CDLNCRIHKKSRNKCQYCRFQKC). The segment at 205 to 280 (HNAIRFGRMP…DKSPFVIYDM (76 aa)) is interaction with FAM120B. The NR LBD domain maps to 238–503 (DLRALAKHLY…HPLLQEIYKD (266 aa)). Lys252 participates in a covalent cross-link: Glycyl lysine isopeptide (Lys-Gly) (interchain with G-Cter in ubiquitin). Residues 314–317 (QFRS), His351, His477, and Tyr501 contribute to the rosiglitazone site. Positions 495–503 (PLLQEIYKD) match the 9aaTAD motif.

The protein belongs to the nuclear hormone receptor family. NR1 subfamily. Interacts with FOXO1 (acetylated form). Heterodimer with other nuclear receptors, such as RXRA. The heterodimer with the retinoic acid receptor RXRA is called adipocyte-specific transcription factor ARF6. Interacts with NCOA6 coactivator, leading to a strong increase in transcription of target genes. Interacts with coactivator PPARBP, leading to a mild increase in transcription of target genes. Interacts with NOCA7 in a ligand-inducible manner. Interacts with NCOA1 and NCOA2 LXXLL motifs. Interacts with ASXL1, ASXL2, DNTTIP2, FAM120B, MAP2K1/MEK1, NR0B2, PDPK1, PRDM16, PRMT2 and TGFB1I1. Interacts (when activated by agonist) with PPP5C. Interacts with HELZ2 and THRAP3; the interaction stimulates the transcriptional activity of PPARG. Interacts with PER2, the interaction is ligand dependent and blocks PPARG recruitment to target promoters. Interacts with NOCT. Interacts with ACTN4. Interacts (when in the liganded conformation) with GPS2. Interacts with CRY1 and CRY2 in a ligand-dependent manner. In the absence of hormonal ligand, interacts with TACC1. In macrophages, interacts with PAQR3 and STUB1; the interactions promote PPARG poylubiquitination and STUB1-mediated degradation. O-GlcNAcylation at Thr-84 reduces transcriptional activity in adipocytes. Post-translationally, phosphorylated in basal conditions and dephosphorylated when treated with the ligand. May be dephosphorylated by PPP5C. The phosphorylated form may be inactive and dephosphorylation at Ser-112 induces adipogenic activity. In terms of processing, ubiquitinated by E3 ubiquitin-protein ligase complex containing FBXO9; leading to proteasomal degradation. Ubiquitinated at Lys-252 by TRIM55 leading to proteasomal degradation. Ubiquitinated by E3 ubiquitin-protein ligase STUB1/CHIP; leading to proteasomal degradation. As to expression, highest expression in adipose tissue. Lower in skeletal muscle, spleen, heart and liver. Also detectable in placenta, lung and ovary.

The protein resides in the nucleus. Its subcellular location is the cytoplasm. With respect to regulation, PDPK1 activates its transcriptional activity independently of its kinase activity. Functionally, nuclear receptor that binds peroxisome proliferators such as hypolipidemic drugs and fatty acids. Once activated by a ligand, the nuclear receptor binds to DNA specific PPAR response elements (PPRE) and modulates the transcription of its target genes, such as acyl-CoA oxidase. It therefore controls the peroxisomal beta-oxidation pathway of fatty acids. Key regulator of adipocyte differentiation and glucose homeostasis. ARF6 acts as a key regulator of the tissue-specific adipocyte P2 (aP2) enhancer. Acts as a critical regulator of gut homeostasis by suppressing NF-kappa-B-mediated pro-inflammatory responses. Plays a role in the regulation of cardiovascular circadian rhythms by regulating the transcription of BMAL1 in the blood vessels. (Microbial infection) Upon treatment with M.tuberculosis or its lipoprotein LpqH, phosphorylation of MAPK p38 and IL-6 production are modulated, probably via this protein. This is Peroxisome proliferator-activated receptor gamma (PPARG) from Homo sapiens (Human).